The primary structure comprises 461 residues: Na(+)/H(+) antiporter NhaA (461 aa).

Residues 1-23 (MILSTQRLGRFMSPAPTPAPDAK) form a disordered region. The next 12 membrane-spanning stretches (helical) occupy residues 48–68 (VGGA…NSPV), 89–109 (LSLG…LVGL), 127–147 (IVPV…YAAV), 157–177 (GWAI…AIIG), 186–206 (IFLL…IAFF), 211–231 (IQAA…FLAQ), 236–256 (FFGA…IVTW), 257–277 (ALVH…GFAV), 305–325 (ISAG…AVGG), 339–359 (IGII…TTWI), 374–394 (WIDV…SLLV), and 408–428 (HAKV…TVVL).

The protein belongs to the NhaA Na(+)/H(+) (TC 2.A.33) antiporter family.

It localises to the cell membrane. The catalysed reaction is Na(+)(in) + 2 H(+)(out) = Na(+)(out) + 2 H(+)(in). In terms of biological role, na(+)/H(+) antiporter that extrudes sodium in exchange for external protons. The chain is Na(+)/H(+) antiporter NhaA from Arthrobacter sp. (strain FB24).